The following is a 265-amino-acid chain: Arcelin-1 (265 aa).

The N-terminal stretch at 1 to 21 (MASSNLLTLALFLVLLTHANS) is a signal peptide. N-linked (GlcNAc...) asparagine glycosylation is found at Asn-33, Asn-89, and Asn-128. A disulfide bond links Cys-165 and Cys-201.

The protein belongs to the leguminous lectin family. In terms of assembly, homodimer.

Its function is as follows. Seed storage. This carbohydrate-binding lectin has toxic effects on an important bean bruchid pest, Z.subfasciatus. Antibiosis properties of legume lectins are proposed to be due to the lysis of epithelial cells of the intestine by binding to the carbohydrate moieties of these proteins. This Phaseolus vulgaris (Kidney bean) protein is Arcelin-1 (ARC1).